Reading from the N-terminus, the 256-residue chain is tRNA-cytidine(32) 2-sulfurtransferase (256 aa).

A PP-loop motif motif is present at residues 35 to 40 (SGGKDS). 3 residues coordinate [4Fe-4S] cluster: C110, C113, and C201.

Belongs to the TtcA family. Homodimer. Mg(2+) serves as cofactor. The cofactor is [4Fe-4S] cluster.

Its subcellular location is the cytoplasm. The catalysed reaction is cytidine(32) in tRNA + S-sulfanyl-L-cysteinyl-[cysteine desulfurase] + AH2 + ATP = 2-thiocytidine(32) in tRNA + L-cysteinyl-[cysteine desulfurase] + A + AMP + diphosphate + H(+). It participates in tRNA modification. Catalyzes the ATP-dependent 2-thiolation of cytidine in position 32 of tRNA, to form 2-thiocytidine (s(2)C32). The sulfur atoms are provided by the cysteine/cysteine desulfurase (IscS) system. The sequence is that of tRNA-cytidine(32) 2-sulfurtransferase from Coxiella burnetii (strain RSA 493 / Nine Mile phase I).